Consider the following 107-residue polypeptide: uncharacterized protein (107 aa).

Positions 87–107 (KNRNGPKAEKRRPYVRAHAKW) are disordered.

This is an uncharacterized protein from Saccharomyces cerevisiae (strain ATCC 204508 / S288c) (Baker's yeast).